Consider the following 822-residue polypeptide: Phenylalanine--tRNA ligase beta subunit (822 aa).

Residues 44-162 form the tRNA-binding domain; sequence LSKNTNLVVG…DQIALGSNAL (119 aa). A disordered region spans residues 201–224; that stretch reads QSSNNNQETKSTNYKTKNSEDQTN. In terms of domain architecture, B5 spans 430 to 513; that stretch reads RTNPTISLNL…RLYGCHKLPP (84 aa). The Mg(2+) site is built by aspartate 491, aspartate 497, and aspartate 501. Residues 730 to 822 enclose the FDX-ACB domain; it reads PKFPTVIRDL…LIKHFHIEIR (93 aa).

This sequence belongs to the phenylalanyl-tRNA synthetase beta subunit family. Type 1 subfamily. In terms of assembly, tetramer of two alpha and two beta subunits. The cofactor is Mg(2+).

It is found in the cytoplasm. It carries out the reaction tRNA(Phe) + L-phenylalanine + ATP = L-phenylalanyl-tRNA(Phe) + AMP + diphosphate + H(+). This chain is Phenylalanine--tRNA ligase beta subunit, found in Onion yellows phytoplasma (strain OY-M).